The following is a 237-amino-acid chain: B3 domain-containing protein Os06g0194400 (237 aa).

2 disordered regions span residues 1 to 23 (MIEA…RQVE) and 38 to 82 (SAAV…LPEK). A DNA-binding region (TF-B3) is located at residues 139-230 (FVKPMLQSHV…KFKVYIIRAS (92 aa)).

The protein localises to the nucleus. The sequence is that of B3 domain-containing protein Os06g0194400 from Oryza sativa subsp. japonica (Rice).